Reading from the N-terminus, the 331-residue chain is F-box protein At2g26160 (331 aa).

The 49-residue stretch at Pro4–Pro52 folds into the F-box domain.

The protein is F-box protein At2g26160 of Arabidopsis thaliana (Mouse-ear cress).